The chain runs to 306 residues: D-alanine--D-alanine ligase B (306 aa).

The ATP-grasp domain occupies 101–303 (KLLWQGAGLP…FSQLVVRILE (203 aa)). ATP is bound at residue 134–189 (ISALGLPVIVKPSREGSSVGMSKVVAENALQDALRLAFQHDEEVLIEKWLSGPEFT). The Mg(2+) site is built by Asp257, Glu270, and Asn272.

This sequence belongs to the D-alanine--D-alanine ligase family. Requires Mg(2+) as cofactor. It depends on Mn(2+) as a cofactor.

The protein resides in the cytoplasm. It catalyses the reaction 2 D-alanine + ATP = D-alanyl-D-alanine + ADP + phosphate + H(+). Its pathway is cell wall biogenesis; peptidoglycan biosynthesis. Functionally, cell wall formation. The protein is D-alanine--D-alanine ligase B of Shigella flexneri.